The primary structure comprises 523 residues: Glutamate--cysteine ligase, chloroplastic (523 aa).

A disulfide bridge links C187 with C407.

The protein belongs to the carboxylate-amine ligase family. Glutamate--cysteine ligase type 2 subfamily. Homodimer or monomer when oxidized or reduced, respectively. In terms of processing, the Cys-187-Cys-407 disulfide bridge is known to modulate the enzyme activity according to the redox status. The oxidized form constitutes the active enzyme.

Its subcellular location is the plastid. It localises to the chloroplast. The enzyme catalyses L-cysteine + L-glutamate + ATP = gamma-L-glutamyl-L-cysteine + ADP + phosphate + H(+). The protein operates within sulfur metabolism; glutathione biosynthesis; glutathione from L-cysteine and L-glutamate: step 1/2. The polypeptide is Glutamate--cysteine ligase, chloroplastic (GSH1) (Solanum lycopersicum (Tomato)).